We begin with the raw amino-acid sequence, 179 residues long: UPF0227 protein VC0395_A1482/VC395_2007 (179 aa).

The protein belongs to the UPF0227 family.

The chain is UPF0227 protein VC0395_A1482/VC395_2007 from Vibrio cholerae serotype O1 (strain ATCC 39541 / Classical Ogawa 395 / O395).